Consider the following 3123-residue polypeptide: Protein bark beetle (3123 aa).

An N-terminal signal peptide occupies residues 1–34 (MKLQHHKTNRQRISKPHRDPKWASICLWLLVTLA). Over 35 to 2714 (FSTHLARSQE…IIDPLSWRAD (2680 aa)) the chain is Extracellular. Residues 83–104 (DVTVAPQGSTPSMTSSSSYTEL) are disordered. The segment covering 91-102 (STPSMTSSSSYT) has biased composition (low complexity). One can recognise an SRCR 1 domain in the interval 191-295 (IRLVDGPTPV…YHNDLGIQCL (105 aa)). 3 disulfides stabilise this stretch: C216/C284, C231/C294, and C262/C272. N221 is a glycosylation site (N-linked (GlcNAc...) asparagine). PbH1 repeat units lie at residues 358-380 (GLPP…NSTR), 382-404 (WAGF…FVNS), and 406-428 (QGAV…KYVG). 3 N-linked (GlcNAc...) asparagine glycosylation sites follow: N377, N389, and N403. C446 and C474 are joined by a disulfide. The CUB domain maps to 446 to 559 (CTLPTTSGQT…NGFFRMTSGD (114 aa)). Residues N498 and N523 are each glycosylated (N-linked (GlcNAc...) asparagine). PbH1 repeat units lie at residues 562-584 (AYDL…AIDN), 586-609 (RSKL…HVTS), and 611-633 (AGDV…NITY). 8 N-linked (GlcNAc...) asparagine glycosylation sites follow: N615, N620, N630, N639, N658, N672, N702, and N709. PbH1 repeat units follow at residues 756-778 (NLQG…FINN) and 789-809 (PVKL…HVVS). N-linked (GlcNAc...) asparagine glycosylation is found at N834, N900, and N1040. An SRCR 2 domain is found at 1071–1175 (VRLVGGAGAN…HENDVGLRCY (105 aa)). Disulfide bonds link C1096–C1164, C1109–C1174, and C1144–C1154. 2 PbH1 repeats span residues 1219-1241 (HARH…GIIY) and 1248-1270 (KSVN…SLKQ). N1375 carries an N-linked (GlcNAc...) asparagine glycan. PbH1 repeat units lie at residues 1451–1475 (VPTL…YYNR) and 1489–1511 (NESI…LIRS). Residues N1489, N1520, and N1529 are each glycosylated (N-linked (GlcNAc...) asparagine). The PbH1 13 repeat unit spans residues 1553–1575 (LFHYVIQDTTFEQNTHGGFQVSL). N1584, N1593, and N1614 each carry an N-linked (GlcNAc...) asparagine glycan. The stretch at 1722–1744 (LYRNLIAENEMDYNLVAGVRSAR) is one PbH1 14 repeat. 3 N-linked (GlcNAc...) asparagine glycosylation sites follow: N1883, N1920, and N1940. One can recognise an SRCR 3 domain in the interval 1912-2037 (IRLCTSANNC…DDVFVFVSCN (126 aa)). 3 cysteine pairs are disulfide-bonded: C1950/C2025, C1963/C2036, and C2000/C2010. 2 PbH1 repeats span residues 2104–2126 (HKNP…NMIA) and 2128–2150 (SGKL…SIVS). N2139, N2231, N2251, N2314, and N2357 each carry an N-linked (GlcNAc...) asparagine glycan. PbH1 repeat units lie at residues 2337-2361 (TPTL…FSTC), 2372-2393 (MNSL…RIRA), and 2401-2424 (SLRG…YVEG). N2459, N2536, N2546, N2566, N2596, and N2636 each carry an N-linked (GlcNAc...) asparagine glycan. Residues 2715-2735 (IFAISIISAFVLAIILLILVA) traverse the membrane as a helical segment. Topologically, residues 2736-3123 (FCWFAKSKHR…SHSQPLETAM (388 aa)) are cytoplasmic. Disordered stretches follow at residues 2766–2789 (IDPQ…LSKG), 2961–2983 (YQRS…PFDQ), 2996–3015 (LYRP…ADMR), and 3025–3123 (RSSK…ETAM). Over residues 2778-2788 (YNMSSNGTLSK) the composition is skewed to polar residues. Low complexity predominate over residues 2964-2973 (SSHSSFMPHR). Composition is skewed to low complexity over residues 3047–3057 (PNVAPAGGPAQ) and 3068–3078 (SEESSPTTPSP). The segment covering 3107–3123 (PLQTNGRSHSQPLETAM) has biased composition (polar residues).

N-glycosylated. Post-translationally, may be proteolytically cleaved in the extracellular domain. In terms of tissue distribution, expression detected in embryonic epithelia and central nervous system (at protein level). First detected during stage 13 in the tracheal system, the foregut, the hindgut, the salivary glands and the epidermis. Expression persists in these tissues until the end of embryogenesis. Expression in epithelia declines from late stage 15 and expression appears in the central nervous system during stage 16.

The protein localises to the cell membrane. Its subcellular location is the cell junction. It localises to the septate junction. It is found in the adherens junction. Its function is as follows. Required for the maturation but not the establishment of septate junctions in developing epithelial cells and is involved in epithelial cell adhesion during septate junction maturation. Plays a role in the proper localization of the septate junction core components pck/mega, kune, Nrx-IV and Nrg during late embryogenesis. Involved in the formation of tricellular junctions which mediate cell contact where three epithelial cells meet but not of bicellular junctions. Required for the accumulation of Gli at tricellular junctions. This Drosophila melanogaster (Fruit fly) protein is Protein bark beetle.